We begin with the raw amino-acid sequence, 267 residues long: MTDQRRNVYFFHKQDQETNEQARSLTQLAEEHGFTVVNQHSDANIIASIGGDGTFLQAVRKTNFRDDCLYVGITKKGKAHLYCDFHSDEREKMVDAMTFEQIEVRKYPLIEVTVDQASPFHCLNEVSIRSSIIKTFVMDVLIDDLHFETFRGDGMIISTPTGSTAYNKSVAGAVVDPLLPCMQVSELASLNNNTYRTLGSPFVLSSDRKLTLRVVQDGNEHPIIGLDNEALSTRNVKTIEIKLSNKKIKTVKLKDNSFWEKVKRTFL.

Catalysis depends on aspartate 52, which acts as the Proton acceptor. NAD(+) is bound by residues 52-53 (DG), 124-125 (NE), arginine 151, aspartate 153, 164-169 (TAYNKS), and alanine 188.

Belongs to the NAD kinase family. A divalent metal cation is required as a cofactor.

The protein localises to the cytoplasm. The catalysed reaction is NAD(+) + ATP = ADP + NADP(+) + H(+). Functionally, involved in the regulation of the intracellular balance of NAD and NADP, and is a key enzyme in the biosynthesis of NADP. Catalyzes specifically the phosphorylation on 2'-hydroxyl of the adenosine moiety of NAD to yield NADP. This Bacillus subtilis (strain 168) protein is NAD kinase 2.